The sequence spans 124 residues: Large ribosomal subunit protein bL12 (124 aa).

Belongs to the bacterial ribosomal protein bL12 family. In terms of assembly, homodimer. Part of the ribosomal stalk of the 50S ribosomal subunit. Forms a multimeric L10(L12)X complex, where L10 forms an elongated spine to which 2 to 4 L12 dimers bind in a sequential fashion. Binds GTP-bound translation factors.

Its function is as follows. Forms part of the ribosomal stalk which helps the ribosome interact with GTP-bound translation factors. Is thus essential for accurate translation. The protein is Large ribosomal subunit protein bL12 of Azobacteroides pseudotrichonymphae genomovar. CFP2.